The following is a 1225-amino-acid chain: Clustered mitochondria protein homolog (1225 aa).

Residues M1–N22 are disordered. The Clu domain maps to Q281–N532. Disordered regions lie at residues E577 to D605 and A846 to A878. TPR repeat units lie at residues A949–T982, I991–I1024, and I1033–L1066. Residues R1153–S1184 are compositionally biased toward polar residues. Residues R1153–A1225 are disordered.

This sequence belongs to the CLU family. May associate with the eukaryotic translation initiation factor 3 (eIF-3) complex.

Its subcellular location is the cytoplasm. Functionally, mRNA-binding protein involved in proper cytoplasmic distribution of mitochondria. The polypeptide is Clustered mitochondria protein homolog (Emericella nidulans (strain FGSC A4 / ATCC 38163 / CBS 112.46 / NRRL 194 / M139) (Aspergillus nidulans)).